Reading from the N-terminus, the 475-residue chain is LEC14B homolog (475 aa).

Residues 1 to 34 are disordered; sequence MSYRTRFGKDNSACDSGNAVEGSGSSKGPNEVSN. Over residues 23-33 the composition is skewed to polar residues; the sequence is SGSSKGPNEVS. WD repeat units lie at residues 211 to 240, 252 to 283, 299 to 329, 375 to 411, and 423 to 453; these read DEFG…YVYD, AHSS…KVWD, GHLE…QLWD, GHGV…YIYD, and HHEG…ARWE.

This sequence belongs to the WD repeat LEC14B family.

This chain is LEC14B homolog, found in Prunus armeniaca (Apricot).